Here is a 250-residue protein sequence, read N- to C-terminus: Hydroxyacylglutathione hydrolase (250 aa).

7 residues coordinate Zn(2+): histidine 53, histidine 55, aspartate 57, histidine 58, histidine 111, aspartate 128, and histidine 166.

This sequence belongs to the metallo-beta-lactamase superfamily. Glyoxalase II family. As to quaternary structure, monomer. Zn(2+) is required as a cofactor.

The catalysed reaction is an S-(2-hydroxyacyl)glutathione + H2O = a 2-hydroxy carboxylate + glutathione + H(+). It participates in secondary metabolite metabolism; methylglyoxal degradation; (R)-lactate from methylglyoxal: step 2/2. Functionally, thiolesterase that catalyzes the hydrolysis of S-D-lactoyl-glutathione to form glutathione and D-lactic acid. The chain is Hydroxyacylglutathione hydrolase from Methylobacillus flagellatus (strain ATCC 51484 / DSM 6875 / VKM B-1610 / KT).